An 85-amino-acid polypeptide reads, in one-letter code: Small ribosomal subunit protein uS17 (85 aa).

It belongs to the universal ribosomal protein uS17 family. Part of the 30S ribosomal subunit.

Its function is as follows. One of the primary rRNA binding proteins, it binds specifically to the 5'-end of 16S ribosomal RNA. The protein is Small ribosomal subunit protein uS17 of Geobacter sulfurreducens (strain ATCC 51573 / DSM 12127 / PCA).